The chain runs to 616 residues: Dihydroxy-acid dehydratase (616 aa).

Asp-81 provides a ligand contact to Mg(2+). Cys-122 contacts [2Fe-2S] cluster. 2 residues coordinate Mg(2+): Asp-123 and Lys-124. At Lys-124 the chain carries N6-carboxylysine. Residue Cys-195 participates in [2Fe-2S] cluster binding. A Mg(2+)-binding site is contributed by Glu-491. The Proton acceptor role is filled by Ser-517.

The protein belongs to the IlvD/Edd family. Homodimer. [2Fe-2S] cluster serves as cofactor. Mg(2+) is required as a cofactor.

It catalyses the reaction (2R)-2,3-dihydroxy-3-methylbutanoate = 3-methyl-2-oxobutanoate + H2O. The catalysed reaction is (2R,3R)-2,3-dihydroxy-3-methylpentanoate = (S)-3-methyl-2-oxopentanoate + H2O. Its pathway is amino-acid biosynthesis; L-isoleucine biosynthesis; L-isoleucine from 2-oxobutanoate: step 3/4. It functions in the pathway amino-acid biosynthesis; L-valine biosynthesis; L-valine from pyruvate: step 3/4. Its function is as follows. Functions in the biosynthesis of branched-chain amino acids. Catalyzes the dehydration of (2R,3R)-2,3-dihydroxy-3-methylpentanoate (2,3-dihydroxy-3-methylvalerate) into 2-oxo-3-methylpentanoate (2-oxo-3-methylvalerate) and of (2R)-2,3-dihydroxy-3-methylbutanoate (2,3-dihydroxyisovalerate) into 2-oxo-3-methylbutanoate (2-oxoisovalerate), the penultimate precursor to L-isoleucine and L-valine, respectively. In Pectobacterium atrosepticum (strain SCRI 1043 / ATCC BAA-672) (Erwinia carotovora subsp. atroseptica), this protein is Dihydroxy-acid dehydratase.